The following is a 476-amino-acid chain: Proline--tRNA ligase (476 aa).

This sequence belongs to the class-II aminoacyl-tRNA synthetase family. ProS type 3 subfamily. As to quaternary structure, homodimer.

It localises to the cytoplasm. It carries out the reaction tRNA(Pro) + L-proline + ATP = L-prolyl-tRNA(Pro) + AMP + diphosphate. Functionally, catalyzes the attachment of proline to tRNA(Pro) in a two-step reaction: proline is first activated by ATP to form Pro-AMP and then transferred to the acceptor end of tRNA(Pro). This Mycoplasmopsis pulmonis (strain UAB CTIP) (Mycoplasma pulmonis) protein is Proline--tRNA ligase.